The sequence spans 464 residues: Argininosuccinate lyase 2 (464 aa).

It belongs to the lyase 1 family. Argininosuccinate lyase subfamily.

It is found in the cytoplasm. The catalysed reaction is 2-(N(omega)-L-arginino)succinate = fumarate + L-arginine. It participates in amino-acid biosynthesis; L-arginine biosynthesis; L-arginine from L-ornithine and carbamoyl phosphate: step 3/3. The chain is Argininosuccinate lyase 2 from Pseudomonas fluorescens (strain Pf0-1).